Consider the following 354-residue polypeptide: Fe(3+) ions import ATP-binding protein FbpC (354 aa).

Positions 4–236 (LELHAVHKSF…PRDAQTALFL (233 aa)) constitute an ABC transporter domain. Residue 36-43 (GPSGSGKT) coordinates ATP.

The protein belongs to the ABC transporter superfamily. Fe(3+) ion importer (TC 3.A.1.10) family. The complex is composed of two ATP-binding proteins (FbpC), two transmembrane proteins (FbpB) and a solute-binding protein (FbpA).

The protein localises to the cell inner membrane. The catalysed reaction is Fe(3+)(out) + ATP + H2O = Fe(3+)(in) + ADP + phosphate + H(+). Part of the ABC transporter complex FbpABC involved in Fe(3+) ions import. Responsible for energy coupling to the transport system. The polypeptide is Fe(3+) ions import ATP-binding protein FbpC (Pseudomonas fluorescens (strain ATCC BAA-477 / NRRL B-23932 / Pf-5)).